We begin with the raw amino-acid sequence, 364 residues long: Fructose-bisphosphate aldolase A (364 aa).

A Phosphotyrosine modification is found at Y5. Position 9 is a phosphothreonine (T9). S36 and S39 each carry phosphoserine. At K42 the chain carries N6-acetyllysine; alternate. A Glycyl lysine isopeptide (Lys-Gly) (interchain with G-Cter in SUMO1); alternate cross-link involves residue K42. A Glycyl lysine isopeptide (Lys-Gly) (interchain with G-Cter in SUMO2); alternate cross-link involves residue K42. Beta-D-fructose 1,6-bisphosphate is bound at residue R43. Position 46 is a phosphoserine (S46). Position 99 is an N6-(2-hydroxyisobutyryl)lysine (K99). K108 is subject to N6-acetyllysine. An N6-acetyllysine; alternate modification is found at K111. N6-malonyllysine; alternate is present on K111. A Phosphoserine modification is found at S132. K147 bears the N6-(2-hydroxyisobutyryl)lysine mark. Catalysis depends on E188, which acts as the Proton acceptor. The Schiff-base intermediate with dihydroxyacetone-P role is filled by K230. S272 is subject to Phosphoserine. Residues S272–G274, S301, and R304 contribute to the beta-D-fructose 1,6-bisphosphate site. K312 is subject to N6-malonyllysine. Position 330 is an N6-acetyllysine (K330).

This sequence belongs to the class I fructose-bisphosphate aldolase family. Homotetramer. Interacts with SNX9 and WAS. Interacts with FBP2; the interaction blocks FBP2 inhibition by physiological concentrations of AMP and reduces inhibition by Ca(2+).

It is found in the cytoplasm. The protein resides in the myofibril. Its subcellular location is the sarcomere. The protein localises to the i band. It localises to the m line. It carries out the reaction beta-D-fructose 1,6-bisphosphate = D-glyceraldehyde 3-phosphate + dihydroxyacetone phosphate. Its pathway is carbohydrate degradation; glycolysis; D-glyceraldehyde 3-phosphate and glycerone phosphate from D-glucose: step 4/4. In terms of biological role, catalyzes the reversible conversion of beta-D-fructose 1,6-bisphosphate (FBP) into two triose phosphate and plays a key role in glycolysis and gluconeogenesis. In addition, may also function as scaffolding protein. In Mus musculus (Mouse), this protein is Fructose-bisphosphate aldolase A (Aldoa).